A 229-amino-acid chain; its full sequence is 7-cyano-7-deazaguanine synthase (229 aa).

12–22 (LSGGMDSCVCA) is a binding site for ATP. Cys-194, Cys-202, Cys-205, and Cys-208 together coordinate Zn(2+).

This sequence belongs to the QueC family. Requires Zn(2+) as cofactor.

The enzyme catalyses 7-carboxy-7-deazaguanine + NH4(+) + ATP = 7-cyano-7-deazaguanine + ADP + phosphate + H2O + H(+). It participates in purine metabolism; 7-cyano-7-deazaguanine biosynthesis. Functionally, catalyzes the ATP-dependent conversion of 7-carboxy-7-deazaguanine (CDG) to 7-cyano-7-deazaguanine (preQ(0)). This Acidobacterium capsulatum (strain ATCC 51196 / DSM 11244 / BCRC 80197 / JCM 7670 / NBRC 15755 / NCIMB 13165 / 161) protein is 7-cyano-7-deazaguanine synthase.